A 146-amino-acid chain; its full sequence is Protein LDOC1 (146 aa).

The protein belongs to the LDOC1 family. Interacts with NOD2. In terms of tissue distribution, ubiquitously expressed with high levels in brain ant thyroid and low expression in placenta, liver and leukocytes. Expressed as well in six of the seven human breast cancer cell lines examined.

The protein localises to the nucleus. Functionally, may have an important role in the development and/or progression of some cancers. This Homo sapiens (Human) protein is Protein LDOC1 (LDOC1).